Consider the following 280-residue polypeptide: MKVVHTIQDLRDHLRGQNRVAFVPTMGNLHEGHLALMKLARQHGDPVVTSIFVNRLQFGPNEDFDRYPRTLPDDVAKMERDRDVYLVFAPDEREMYPEPQNYRVLPPDDLGDILEGEFRPGFFTGVCTVVMKLLACVQPRVAVFGKKDYQQLMVVRNMCRQLQLPVEILAHETVRADDGLALSSRNRYLSEAERAEAPVLYETLRGIAQRRAGGEQDPAALERVAAQALADRGWKVDYVAVRRQRDLKAPDVAEMSAGEPLVALAAAKLGATRLIDNLEF.

Residue 26–33 (MGNLHEGH) participates in ATP binding. The active-site Proton donor is the His-33. Gln-57 is a (R)-pantoate binding site. Residue Gln-57 coordinates beta-alanine. 145-148 (GKKD) contributes to the ATP binding site. (R)-pantoate is bound at residue Gln-151. Residues Val-174 and 182–185 (LSSR) contribute to the ATP site.

Belongs to the pantothenate synthetase family. Homodimer.

The protein localises to the cytoplasm. The enzyme catalyses (R)-pantoate + beta-alanine + ATP = (R)-pantothenate + AMP + diphosphate + H(+). Its pathway is cofactor biosynthesis; (R)-pantothenate biosynthesis; (R)-pantothenate from (R)-pantoate and beta-alanine: step 1/1. In terms of biological role, catalyzes the condensation of pantoate with beta-alanine in an ATP-dependent reaction via a pantoyl-adenylate intermediate. This is Pantothenate synthetase from Bordetella bronchiseptica (strain ATCC BAA-588 / NCTC 13252 / RB50) (Alcaligenes bronchisepticus).